The chain runs to 386 residues: Ethanolamine kinase 2 (386 aa).

This sequence belongs to the choline/ethanolamine kinase family. Expressed in kidney, liver, ovary, testis and prostate.

The catalysed reaction is ethanolamine + ATP = phosphoethanolamine + ADP + H(+). The protein operates within phospholipid metabolism; phosphatidylethanolamine biosynthesis; phosphatidylethanolamine from ethanolamine: step 1/3. In terms of biological role, highly specific for ethanolamine phosphorylation. Does not have choline kinase activity. The sequence is that of Ethanolamine kinase 2 (ETNK2) from Homo sapiens (Human).